The chain runs to 130 residues: Small ribosomal subunit protein uS11 (130 aa).

The protein belongs to the universal ribosomal protein uS11 family. In terms of assembly, part of the 30S ribosomal subunit. Interacts with proteins S7 and S18. Binds to IF-3.

In terms of biological role, located on the platform of the 30S subunit, it bridges several disparate RNA helices of the 16S rRNA. Forms part of the Shine-Dalgarno cleft in the 70S ribosome. The chain is Small ribosomal subunit protein uS11 from Caldanaerobacter subterraneus subsp. tengcongensis (strain DSM 15242 / JCM 11007 / NBRC 100824 / MB4) (Thermoanaerobacter tengcongensis).